We begin with the raw amino-acid sequence, 140 residues long: Nucleoside diphosphate kinase (140 aa).

The ATP site is built by lysine 11, phenylalanine 59, arginine 87, threonine 93, arginine 104, and asparagine 114. Catalysis depends on histidine 117, which acts as the Pros-phosphohistidine intermediate.

The protein belongs to the NDK family. Homotetramer. Requires Mg(2+) as cofactor.

It localises to the cytoplasm. It catalyses the reaction a 2'-deoxyribonucleoside 5'-diphosphate + ATP = a 2'-deoxyribonucleoside 5'-triphosphate + ADP. The enzyme catalyses a ribonucleoside 5'-diphosphate + ATP = a ribonucleoside 5'-triphosphate + ADP. In terms of biological role, major role in the synthesis of nucleoside triphosphates other than ATP. The ATP gamma phosphate is transferred to the NDP beta phosphate via a ping-pong mechanism, using a phosphorylated active-site intermediate. The chain is Nucleoside diphosphate kinase from Rickettsia akari (strain Hartford).